Reading from the N-terminus, the 268-residue chain is Thiazole synthase (268 aa).

Lys-100 functions as the Schiff-base intermediate with DXP in the catalytic mechanism. Residues Gly-161, 187–188 (AG), and 209–210 (NT) contribute to the 1-deoxy-D-xylulose 5-phosphate site. Residues 248–268 (ASPSSPAEGMFTGTQHPAANS) form a disordered region. Over residues 259 to 268 (TGTQHPAANS) the composition is skewed to polar residues.

Belongs to the ThiG family. In terms of assembly, homotetramer. Forms heterodimers with either ThiH or ThiS.

Its subcellular location is the cytoplasm. It carries out the reaction [ThiS sulfur-carrier protein]-C-terminal-Gly-aminoethanethioate + 2-iminoacetate + 1-deoxy-D-xylulose 5-phosphate = [ThiS sulfur-carrier protein]-C-terminal Gly-Gly + 2-[(2R,5Z)-2-carboxy-4-methylthiazol-5(2H)-ylidene]ethyl phosphate + 2 H2O + H(+). It functions in the pathway cofactor biosynthesis; thiamine diphosphate biosynthesis. Catalyzes the rearrangement of 1-deoxy-D-xylulose 5-phosphate (DXP) to produce the thiazole phosphate moiety of thiamine. Sulfur is provided by the thiocarboxylate moiety of the carrier protein ThiS. In vitro, sulfur can be provided by H(2)S. This chain is Thiazole synthase, found in Nitrosomonas europaea (strain ATCC 19718 / CIP 103999 / KCTC 2705 / NBRC 14298).